The chain runs to 192 residues: uncharacterized protein (192 aa).

A Nudix hydrolase domain is found at 29–160 (HRQAAVLIPI…PLDIYRRGDS (132 aa)). A Nudix box motif is present at residues 67–89 (GAVDDTDASVIAAALREAEEEVA). Positions 83 and 87 each coordinate Mg(2+).

This sequence belongs to the Nudix hydrolase family. PCD1 subfamily. Requires Mn(2+) as cofactor. Mg(2+) serves as cofactor.

Its function is as follows. Probably mediates the hydrolysis of some nucleoside diphosphate derivatives. This is an uncharacterized protein from Escherichia coli (strain SE11).